A 267-amino-acid chain; its full sequence is Levodione reductase (267 aa).

Leu17–Leu42 serves as a coordination point for NAD(+). Residue Ser152 coordinates substrate. Tyr165 functions as the Proton acceptor in the catalytic mechanism.

Belongs to the short-chain dehydrogenases/reductases (SDR) family.

It carries out the reaction (4R)-hydroxy-(6R)-2,2,6-trimethylcyclohexanone + NAD(+) = (6R)-2,2,6-trimethyl-1,4-cyclohexanedione + NADH + H(+). Strongly activated by monovalent cations, such as K(+), Na(+), and NH4(+). Its function is as follows. Catalyzes the regio- and stereoselective reversible NAD-dependent reduction of (6R)-2,2,6-trimethyl-1,4-cyclohexanedione (levodione) to (4R,6R)-4-hydroxy-2,2,6-trimethylcyclohexanone (actinol). In Leifsonia aquatica (Corynebacterium aquaticum), this protein is Levodione reductase (lvr).